Consider the following 164-residue polypeptide: MSVNTDELRHQVMINQFVLAAGCAADQAQQLLQAAHWQFETALSTFFQESNIPNSHHHPQMMCTPSNTPATPPNFPDALAMFSKLRTSEGLQSSSSSPMAAVACSPPANFSPFWAASPPNHQVPWIPPSSPNTFHLHCPQPTWPPGASQGGAPQKAMAAMDGQR.

N-acetylserine is present on Ser-2. A disordered region spans residues 144-164 (PPGASQGGAPQKAMAAMDGQR).

Belongs to the UBALD family.

The protein is UBA-like domain-containing protein 2 (Ubald2) of Mus musculus (Mouse).